Reading from the N-terminus, the 325-residue chain is Lactonase drp35 (325 aa).

Ca(2+) is bound by residues glutamate 46, threonine 108, glycine 110, aspartate 128, threonine 131, tyrosine 133, aspartate 136, asparagine 183, aspartate 234, and serine 235. Aspartate 234 functions as the Proton donor in the catalytic mechanism.

It belongs to the SMP-30/CGR1 family. Requires Ca(2+) as cofactor.

It localises to the cytoplasm. Its function is as follows. Exhibits lactonase activity. Acts in cells with perturbed membrane integrity and is possibly related to the membrane homeostasis. The sequence is that of Lactonase drp35 (drp35) from Staphylococcus epidermidis (strain ATCC 12228 / FDA PCI 1200).